The chain runs to 1249 residues: Fanconi anemia group J protein (1249 aa).

Residues 11-442 (GGVKIYFPYK…KDHEPLRAVC (432 aa)) form the Helicase ATP-binding domain. The span at 102–127 (QGTSRHFNYPSTPPSERNGTSSTCQD) shows a compositional bias: polar residues. Residues 102 to 131 (QGTSRHFNYPSTPPSERNGTSSTCQDSPEK) form a disordered region. Positions 158 to 175 (KKRIRPLETTQQIRKRHC) match the Nuclear localization signal motif. 185-192 (AKVDSGKT) is a binding site for ATP. [4Fe-4S] cluster-binding residues include Cys-283, Cys-298, Cys-310, and Cys-350. The DEAH box signature appears at 393–396 (DEAH). Residues Ser-505, Ser-927, Ser-930, Ser-956, Ser-990, Ser-1004, and Ser-1032 each carry the phosphoserine modification. The interaction with BRCA1 stretch occupies residues 888 to 1063 (HQKVLNVSIK…ESSNLTVNTS (176 aa)). 2 disordered regions span residues 1018–1042 (KATP…EKME) and 1108–1127 (VSEE…EAED). Residues 1023 to 1032 (LGSSENSASS) show a composition bias toward polar residues. The span at 1110–1122 (EEDKQSTSNRDFE) shows a compositional bias: basic and acidic residues. Position 1237 is a phosphoserine (Ser-1237). Residue Lys-1249 is modified to N6-acetyllysine.

It belongs to the DEAD box helicase family. DEAH subfamily. In terms of assembly, interacts with the replication protein A complex (RPA) via the RPA1 subunit; following DNA damage they colocalize in foci in the nucleus. Binds directly to the BRCT domains of BRCA1. Interacts with the CIA complex components CIAO1, CIAO2B and MMS19. [4Fe-4S] cluster is required as a cofactor. Phosphorylated. Phosphorylation is necessary for interaction with BRCA1, and is cell-cycle regulated. Post-translationally, acetylation at Lys-1249 facilitates DNA end processing required for repair and checkpoint signaling. In terms of tissue distribution, ubiquitously expressed, with highest levels in testis.

The protein localises to the nucleus. It is found in the cytoplasm. The catalysed reaction is Couples ATP hydrolysis with the unwinding of duplex DNA at the replication fork by translocating in the 5'-3' direction. This creates two antiparallel DNA single strands (ssDNA). The leading ssDNA polymer is the template for DNA polymerase III holoenzyme which synthesizes a continuous strand.. The enzyme catalyses ATP + H2O = ADP + phosphate + H(+). Its activity is regulated as follows. Helicase activity on forked substrates is stimulated by replication protein A complex heterotrimer (RPA1, RPA2, RPA3). Helicase activity on G-quadruplex DNA is stimulated 3-fold by RPA, and inhibited by MSH2/MSH6. Unwinding of G-quadruplex DNA is inhibited by ATP-gamma-S and telomestatin (TMS); TMA does not inhibit unwinding of forked-duplex DNA. Helicase activity on dsDNA and G-quadruplex DNA is inhibited by porphyrin derivatives meso-tetra (N-methyl-4-pyridyl) porphine tetra tosylate (T4) and N-methyl mesoporphyrin IX (NMM). DNA-dependent ATPase and 5'-3' DNA helicase required for the maintenance of chromosomal stability. Acts late in the Fanconi anemia pathway, after FANCD2 ubiquitination. Involved in the repair of DNA double-strand breaks by homologous recombination in a manner that depends on its association with BRCA1. Involved in the repair of abasic sites at replication forks by promoting the degradation of DNA-protein cross-links: acts by catalyzing unfolding of HMCES DNA-protein cross-link via its helicase activity, exposing the underlying DNA and enabling cleavage of the DNA-protein adduct by the SPRTN metalloprotease. Can unwind RNA:DNA substrates. Unwinds G-quadruplex DNA; unwinding requires a 5'-single stranded tail. In Homo sapiens (Human), this protein is Fanconi anemia group J protein.